The sequence spans 139 residues: Pre-hexon-linking protein VIII (139 aa).

Positions 35 to 69 (GAAGDYFKSPTSARTLIPLTASCLRPDGVFQLGGG) are excised as a propeptide.

It belongs to the adenoviridae hexon-linking protein family. In terms of assembly, interacts with the peripentonal hexons as well as the hexons in the facets. Part of a complex composed of the core-capsid bridging protein, the endosome lysis protein VI and the hexon-linking protein VIII; these interactions bridge the virus core to the capsid. Cleaved by the viral protease during virion maturation. May cause the middle segment to be shed from the capsid.

The protein localises to the host nucleus. It is found in the virion. Functionally, structural component of the virion that acts as a cement protein on the capsid interior and which glue the peripentonal hexons and group-of-nine hexons together. The polypeptide is Pre-hexon-linking protein VIII (Bovine adenovirus B serotype 3 (BAdV-3)).